A 185-amino-acid polypeptide reads, in one-letter code: Elongation factor P (185 aa).

The protein belongs to the elongation factor P family.

The protein localises to the cytoplasm. It functions in the pathway protein biosynthesis; polypeptide chain elongation. Its function is as follows. Involved in peptide bond synthesis. Stimulates efficient translation and peptide-bond synthesis on native or reconstituted 70S ribosomes in vitro. Probably functions indirectly by altering the affinity of the ribosome for aminoacyl-tRNA, thus increasing their reactivity as acceptors for peptidyl transferase. This Burkholderia cenocepacia (strain HI2424) protein is Elongation factor P.